The chain runs to 196 residues: MYEYFEGIVTVITPSYIVVDVNGVGYKVYSPTPFAYQKGDKAKIFIEQVVRDTGITLYGFQSEDDKGLFLKLLSVSGIGPKSALAIMAAEDANSLAEAIEQGEVKYLTRFPGVGKKTASQIVLDLKGKLRDYVARLDRQDEEQGNISPALNDALLALIALGYTQKEVDRITTKLEEVNADTADQYIKKGLALLLKK.

Residues 1–61 are domain I; sequence MYEYFEGIVT…DTGITLYGFQ (61 aa). Residues 62 to 140 form a domain II region; sequence SEDDKGLFLK…DYVARLDRQD (79 aa). The flexible linker stretch occupies residues 141-149; it reads EEQGNISPA. Residues 149–196 are domain III; the sequence is ALNDALLALIALGYTQKEVDRITTKLEEVNADTADQYIKKGLALLLKK.

This sequence belongs to the RuvA family. As to quaternary structure, homotetramer. Forms an RuvA(8)-RuvB(12)-Holliday junction (HJ) complex. HJ DNA is sandwiched between 2 RuvA tetramers; dsDNA enters through RuvA and exits via RuvB. An RuvB hexamer assembles on each DNA strand where it exits the tetramer. Each RuvB hexamer is contacted by two RuvA subunits (via domain III) on 2 adjacent RuvB subunits; this complex drives branch migration. In the full resolvosome a probable DNA-RuvA(4)-RuvB(12)-RuvC(2) complex forms which resolves the HJ.

It localises to the cytoplasm. The RuvA-RuvB-RuvC complex processes Holliday junction (HJ) DNA during genetic recombination and DNA repair, while the RuvA-RuvB complex plays an important role in the rescue of blocked DNA replication forks via replication fork reversal (RFR). RuvA specifically binds to HJ cruciform DNA, conferring on it an open structure. The RuvB hexamer acts as an ATP-dependent pump, pulling dsDNA into and through the RuvAB complex. HJ branch migration allows RuvC to scan DNA until it finds its consensus sequence, where it cleaves and resolves the cruciform DNA. The sequence is that of Holliday junction branch migration complex subunit RuvA from Lactobacillus helveticus (strain DPC 4571).